Consider the following 282-residue polypeptide: NADPH-dependent 7-cyano-7-deazaguanine reductase (282 aa).

88–90 (IES) serves as a coordination point for substrate. 90–91 (SK) is a binding site for NADPH. Cys-190 acts as the Thioimide intermediate in catalysis. The active-site Proton donor is Asp-197. 229–230 (HE) provides a ligand contact to substrate. An NADPH-binding site is contributed by 258 to 259 (RG).

Belongs to the GTP cyclohydrolase I family. QueF type 2 subfamily. In terms of assembly, homodimer.

It localises to the cytoplasm. The enzyme catalyses 7-aminomethyl-7-carbaguanine + 2 NADP(+) = 7-cyano-7-deazaguanine + 2 NADPH + 3 H(+). The protein operates within tRNA modification; tRNA-queuosine biosynthesis. In terms of biological role, catalyzes the NADPH-dependent reduction of 7-cyano-7-deazaguanine (preQ0) to 7-aminomethyl-7-deazaguanine (preQ1). The chain is NADPH-dependent 7-cyano-7-deazaguanine reductase from Citrobacter koseri (strain ATCC BAA-895 / CDC 4225-83 / SGSC4696).